Here is a 155-residue protein sequence, read N- to C-terminus: 6,7-dimethyl-8-ribityllumazine synthase (155 aa).

Residues phenylalanine 24, 58–60, and 82–84 each bind 5-amino-6-(D-ribitylamino)uracil; these read AFE and AII. 87–88 contacts (2S)-2-hydroxy-3-oxobutyl phosphate; that stretch reads ST. Catalysis depends on histidine 90, which acts as the Proton donor. 5-amino-6-(D-ribitylamino)uracil is bound at residue phenylalanine 115. Position 129 (arginine 129) interacts with (2S)-2-hydroxy-3-oxobutyl phosphate.

This sequence belongs to the DMRL synthase family.

The catalysed reaction is (2S)-2-hydroxy-3-oxobutyl phosphate + 5-amino-6-(D-ribitylamino)uracil = 6,7-dimethyl-8-(1-D-ribityl)lumazine + phosphate + 2 H2O + H(+). Its pathway is cofactor biosynthesis; riboflavin biosynthesis; riboflavin from 2-hydroxy-3-oxobutyl phosphate and 5-amino-6-(D-ribitylamino)uracil: step 1/2. Its function is as follows. Catalyzes the formation of 6,7-dimethyl-8-ribityllumazine by condensation of 5-amino-6-(D-ribitylamino)uracil with 3,4-dihydroxy-2-butanone 4-phosphate. This is the penultimate step in the biosynthesis of riboflavin. The chain is 6,7-dimethyl-8-ribityllumazine synthase from Chlorobium phaeobacteroides (strain BS1).